Here is a 355-residue protein sequence, read N- to C-terminus: D-alanine--D-alanine ligase (355 aa).

The region spanning 143-350 (KIIFSNLKIP…IEQLVAKLVD (208 aa)) is the ATP-grasp domain. An ATP-binding site is contributed by 178–233 (LKKLNFPVFVKPSNSGSSLGISKVINKSEIIPALEKARGIDPSILIEEGLEVREIE). Positions 303, 317, and 319 each coordinate Mg(2+).

The protein belongs to the D-alanine--D-alanine ligase family. Mg(2+) is required as a cofactor. Mn(2+) serves as cofactor.

The protein resides in the cytoplasm. It catalyses the reaction 2 D-alanine + ATP = D-alanyl-D-alanine + ADP + phosphate + H(+). Its pathway is cell wall biogenesis; peptidoglycan biosynthesis. Cell wall formation. The chain is D-alanine--D-alanine ligase from Prochlorococcus marinus (strain AS9601).